The primary structure comprises 757 residues: Polyribonucleotide nucleotidyltransferase (757 aa).

Residues Asp488 and Asp494 each contribute to the Mg(2+) site. In terms of domain architecture, KH spans 555-614; sequence PKLYTMKINAEKIRDVIGKGGAVIRALTEETGCQINIEEDGTITIAATDAAKADIAKRRI. Residues 624–692 form the S1 motif domain; sequence GKIYEGPVTK…ERGRVKLSMK (69 aa). The interval 693-757 is disordered; it reads VLAERPAPGS…ADTGSGQRVG (65 aa). The segment covering 720 to 736 has biased composition (basic and acidic residues); sequence ALAEREPRREMRDHGHP. The span at 737–747 shows a compositional bias: low complexity; the sequence is PSEQQQQQSPP.

Belongs to the polyribonucleotide nucleotidyltransferase family. Requires Mg(2+) as cofactor.

The protein localises to the cytoplasm. It carries out the reaction RNA(n+1) + phosphate = RNA(n) + a ribonucleoside 5'-diphosphate. Involved in mRNA degradation. Catalyzes the phosphorolysis of single-stranded polyribonucleotides processively in the 3'- to 5'-direction. This is Polyribonucleotide nucleotidyltransferase from Verminephrobacter eiseniae (strain EF01-2).